Here is a 396-residue protein sequence, read N- to C-terminus: MVEAAPRNFTINFGPQHPAAHGVLRLVLELDGEVVRRVDPHIGLLHRGTEKLIEHKTYLQALPYFDRLDYVAPMNQEHAFCLATEKLLNITIPKRGQLIRVLYCEIGRLLSHLLNVTTQAMDVGALTPPLWGFEEREKLMVFYERASGARMHANYFRVGGVHQDLPSKLLDDIWDFCDPFLKVCDDLEGLLTENRIFKQRNVGIAEVKLADAWGWGFSGVMVRGSGAAWDLRKAQPYECYSELDFDIPIGKHGDCYDRYLVRMEEMRQSVRIMKQCLEKLRLPEGQGPVATRDHKIVPPSRAEMKRSMEAMIEHFKLYTEGHRVPAGEVYVAVEAPKGEFGVYLVSDGTNQPYKCKIRAPSFAHLSAMDFLTRGHMLADVSAIIGSLDIVFGEIDR.

This sequence belongs to the complex I 49 kDa subunit family. In terms of assembly, NDH-1 is composed of 14 different subunits. Subunits NuoB, C, D, E, F, and G constitute the peripheral sector of the complex.

The protein resides in the cell inner membrane. The enzyme catalyses a quinone + NADH + 5 H(+)(in) = a quinol + NAD(+) + 4 H(+)(out). Functionally, NDH-1 shuttles electrons from NADH, via FMN and iron-sulfur (Fe-S) centers, to quinones in the respiratory chain. The immediate electron acceptor for the enzyme in this species is believed to be ubiquinone. Couples the redox reaction to proton translocation (for every two electrons transferred, four hydrogen ions are translocated across the cytoplasmic membrane), and thus conserves the redox energy in a proton gradient. This Nitrobacter hamburgensis (strain DSM 10229 / NCIMB 13809 / X14) protein is NADH-quinone oxidoreductase subunit D 1.